Reading from the N-terminus, the 332-residue chain is Nuclear hormone receptor family member nhr-9 (332 aa).

Positions 11 to 85 (ERRCAICSKL…MGMRIVTNQY (75 aa)) form a DNA-binding region, nuclear receptor. 2 NR C4-type zinc fingers span residues 14 to 34 (CAICSKLGNSYNYGVLSCNAC) and 50 to 73 (CINNDNCDTSNLILTCRQCRYNKC). The region spanning 101–332 (DRSNKLMNFQ…KRLCAELLGA (232 aa)) is the NR LBD domain.

The protein belongs to the nuclear hormone receptor family.

Its subcellular location is the nucleus. Its function is as follows. Orphan nuclear receptor. In Caenorhabditis elegans, this protein is Nuclear hormone receptor family member nhr-9 (nhr-9).